A 144-amino-acid polypeptide reads, in one-letter code: NADH-ubiquinone oxidoreductase chain 6 (144 aa).

5 helical membrane-spanning segments follow: residues 1–21 (MIKLFFVLAIFSSIISYMNID), 25–45 (SSFFLIFSLLFSMPIISMSMH), 46–66 (IWFSYFICLLFLSGIFVILVY), 75–95 (VVKSYMSLFLLLISIIYFSPV), and 108–128 (FYYSIYWFIFSFILICLLFFM).

Belongs to the complex I subunit 6 family.

The protein resides in the mitochondrion membrane. It carries out the reaction a ubiquinone + NADH + 5 H(+)(in) = a ubiquinol + NAD(+) + 4 H(+)(out). In terms of biological role, core subunit of the mitochondrial membrane respiratory chain NADH dehydrogenase (Complex I) that is believed to belong to the minimal assembly required for catalysis. Complex I functions in the transfer of electrons from NADH to the respiratory chain. The immediate electron acceptor for the enzyme is believed to be ubiquinone. In Caenorhabditis briggsae, this protein is NADH-ubiquinone oxidoreductase chain 6 (nd6).